Here is a 191-residue protein sequence, read N- to C-terminus: Fe/S biogenesis protein NfuA (191 aa).

[4Fe-4S] cluster is bound by residues C149 and C152.

This sequence belongs to the NfuA family. Homodimer. It depends on [4Fe-4S] cluster as a cofactor.

Its function is as follows. Involved in iron-sulfur cluster biogenesis. Binds a 4Fe-4S cluster, can transfer this cluster to apoproteins, and thereby intervenes in the maturation of Fe/S proteins. Could also act as a scaffold/chaperone for damaged Fe/S proteins. The chain is Fe/S biogenesis protein NfuA from Edwardsiella ictaluri (strain 93-146).